The following is a 494-amino-acid chain: Aspartyl/glutamyl-tRNA(Asn/Gln) amidotransferase subunit B (494 aa).

Belongs to the GatB/GatE family. GatB subfamily. In terms of assembly, heterotrimer of A, B and C subunits.

The enzyme catalyses L-glutamyl-tRNA(Gln) + L-glutamine + ATP + H2O = L-glutaminyl-tRNA(Gln) + L-glutamate + ADP + phosphate + H(+). The catalysed reaction is L-aspartyl-tRNA(Asn) + L-glutamine + ATP + H2O = L-asparaginyl-tRNA(Asn) + L-glutamate + ADP + phosphate + 2 H(+). Its function is as follows. Allows the formation of correctly charged Asn-tRNA(Asn) or Gln-tRNA(Gln) through the transamidation of misacylated Asp-tRNA(Asn) or Glu-tRNA(Gln) in organisms which lack either or both of asparaginyl-tRNA or glutaminyl-tRNA synthetases. The reaction takes place in the presence of glutamine and ATP through an activated phospho-Asp-tRNA(Asn) or phospho-Glu-tRNA(Gln). The protein is Aspartyl/glutamyl-tRNA(Asn/Gln) amidotransferase subunit B of Rhodopseudomonas palustris (strain HaA2).